Here is a 383-residue protein sequence, read N- to C-terminus: Oxysterol-binding protein-related protein 4B (383 aa).

It belongs to the OSBP family. Expressed in stems and flowers.

In terms of biological role, may be involved in the transport of sterols. In Arabidopsis thaliana (Mouse-ear cress), this protein is Oxysterol-binding protein-related protein 4B (ORP4B).